The chain runs to 298 residues: tRNA-uridine aminocarboxypropyltransferase 2 (298 aa).

Methionine 1 bears the N-acetylmethionine mark. Positions 1-52 (MESQKEARILQEPVARPPGASRSQTPNAKERQEGGPVPAAAALGAEADDDSA) are disordered. Phosphoserine is present on serine 132. The DXTW motif lies at 178–181 (DGTW).

It belongs to the TDD superfamily. DTWD2 family.

Its subcellular location is the nucleus. It is found in the cytoplasm. The enzyme catalyses a uridine in tRNA + S-adenosyl-L-methionine = a 3-[(3S)-3-amino-3-carboxypropyl]uridine in tRNA + S-methyl-5'-thioadenosine + H(+). In terms of biological role, catalyzes the formation of 3-(3-amino-3-carboxypropyl)uridine (acp3U) at position 20a in the D-loop of several cytoplasmic tRNAs (acp3U(20a)). Also has a weak activity to form acp3U at position 20 in the D-loop of tRNAs (acp3U(20)). Involved in glycoRNA biosynthesis by mediating formation of acp3U, which acts as an attachment site for N-glycans on tRNAs. GlycoRNAs consist of RNAs modified with secretory N-glycans that are presented on the cell surface. In Macaca fascicularis (Crab-eating macaque), this protein is tRNA-uridine aminocarboxypropyltransferase 2.